The chain runs to 400 residues: S-adenosylmethionine sensor upstream of mTORC1 (400 aa).

Residues Arg99, Gly168, Asp186, Asp198, Phe199, and Ser240 each contribute to the S-adenosyl-L-methionine site.

This sequence belongs to the BMT2/SAMTOR family. As to quaternary structure, interacts with the GATOR1 complex; interaction is disrupted when samtor binds S-adenosyl-L-methionine. Interacts with the KICSTOR complex; interaction is disrupted when samtor binds S-adenosyl-L-methionine.

Functionally, S-adenosyl-L-methionine-binding protein that acts as an inhibitor of mTORC1 signaling via interaction with the GATOR1 and KICSTOR complexes. Acts as a sensor of S-adenosyl-L-methionine to signal methionine sufficiency to mTORC1: in presence of methionine, binds S-adenosyl-L-methionine, leading to disrupt interaction with the GATOR1 and KICSTOR complexes and promote mTORC1 signaling. Upon methionine starvation, S-adenosyl-L-methionine levels are reduced, thereby promoting the association with GATOR1 and KICSTOR, leading to inhibit mTORC1 signaling. Probably also acts as a S-adenosyl-L-methionine-dependent methyltransferase. This Xenopus tropicalis (Western clawed frog) protein is S-adenosylmethionine sensor upstream of mTORC1.